Here is a 299-residue protein sequence, read N- to C-terminus: Oxygen-dependent coproporphyrinogen-III oxidase (299 aa).

Ser92 is a binding site for substrate. Mn(2+)-binding residues include His96 and His106. The Proton donor role is filled by His106. 108–110 contributes to the substrate binding site; sequence NVR. 2 residues coordinate Mn(2+): His145 and His175. The segment at 240-275 is important for dimerization; the sequence is YVEFNLVWDRGTLFGLQTGGRTESILMSMPPLVRWE. 258 to 260 provides a ligand contact to substrate; that stretch reads GGR.

It belongs to the aerobic coproporphyrinogen-III oxidase family. Homodimer. It depends on Mn(2+) as a cofactor.

The protein localises to the cytoplasm. The catalysed reaction is coproporphyrinogen III + O2 + 2 H(+) = protoporphyrinogen IX + 2 CO2 + 2 H2O. It participates in porphyrin-containing compound metabolism; protoporphyrin-IX biosynthesis; protoporphyrinogen-IX from coproporphyrinogen-III (O2 route): step 1/1. Involved in the heme biosynthesis. Catalyzes the aerobic oxidative decarboxylation of propionate groups of rings A and B of coproporphyrinogen-III to yield the vinyl groups in protoporphyrinogen-IX. The polypeptide is Oxygen-dependent coproporphyrinogen-III oxidase (Escherichia fergusonii (strain ATCC 35469 / DSM 13698 / CCUG 18766 / IAM 14443 / JCM 21226 / LMG 7866 / NBRC 102419 / NCTC 12128 / CDC 0568-73)).